Consider the following 1093-residue polypeptide: Fused isobutyryl-CoA mutase (1093 aa).

The tract at residues M1–G20 is disordered. Residues K26–R156 enclose the B12-binding domain. Adenosylcob(III)alamin is bound at residue H39. A GTPase chaperone MeaI region spans residues L169 to A417. G219–S224 serves as a coordination point for GTP. S223, I248, D249, and D262 together coordinate Mg(2+). R265 provides a ligand contact to GTP. Residues E310 and T311 each contribute to the Mg(2+) site. Residue N357–D360 coordinates GTP. The interval R418–P579 is linker. The substrate site is built by F587, R622, R728, Y772, S821, R856, and K861. Residues E973 and N1092 each contribute to the GTP site.

Belongs to the IcmF family. As to quaternary structure, homodimer. The cofactor is adenosylcob(III)alamin. It depends on Mg(2+) as a cofactor.

The catalysed reaction is 2-methylpropanoyl-CoA = butanoyl-CoA. It carries out the reaction 3-methylbutanoyl-CoA = 2,2-dimethylpropanoyl-CoA. The enzyme catalyses GTP + H2O = GDP + phosphate + H(+). Its activity is regulated as follows. Is prone to inactivation during catalytic turnover due to the occasional loss of the 5'-deoxyadenosine moiety and formation of the inactive cob(II)alamin cofactor in its active site. The GTPase activity of IcmF powers the ejection of the inactive cofactor and requires the presence of an acceptor protein, adenosyltransferase (ATR), for receiving it. ATR, in turn, catalyzes an adenosylation reaction converting cob(II)alamin in the presence of ATP and a reductant to the active AdoCbl cofactor. The repaired cofactor is then reloaded onto IcmF in a GTPase-gated step, regenerating active enzyme. The GTPase activity of IcmF is significantly decreased in the presence of excess of AdoCbl or cob(II)alamin and is higher in the apoenzyme state, indicating that the G-domain senses the presence and identity of the cofactor in the mutase active site. Its function is as follows. Catalyzes the reversible interconversion of isobutyryl-CoA and n-butyryl-CoA, and to a much lesser extent, of pivalyl-CoA and isovaleryl-CoA, using radical chemistry. Also exhibits GTPase activity, associated with its G-protein domain (MeaI) that functions as a chaperone that assists cofactor delivery and proper holo-enzyme assembly. The G-domain of IcmF also has a role in its cofactor repair. Does not display ATPase activity. The sequence is that of Fused isobutyryl-CoA mutase from Cupriavidus metallidurans (strain ATCC 43123 / DSM 2839 / NBRC 102507 / CH34) (Ralstonia metallidurans).